The chain runs to 180 residues: Shikimate kinase (180 aa).

14-19 (GAGKSS) provides a ligand contact to ATP. Residue serine 18 participates in Mg(2+) binding. Substrate contacts are provided by aspartate 36, arginine 60, and glycine 82. Arginine 120 is a binding site for ATP. Substrate is bound at residue arginine 139.

The protein belongs to the shikimate kinase family. In terms of assembly, monomer. Requires Mg(2+) as cofactor.

Its subcellular location is the cytoplasm. It carries out the reaction shikimate + ATP = 3-phosphoshikimate + ADP + H(+). It participates in metabolic intermediate biosynthesis; chorismate biosynthesis; chorismate from D-erythrose 4-phosphate and phosphoenolpyruvate: step 5/7. Catalyzes the specific phosphorylation of the 3-hydroxyl group of shikimic acid using ATP as a cosubstrate. In Xylella fastidiosa (strain 9a5c), this protein is Shikimate kinase.